A 377-amino-acid chain; its full sequence is Naringenin,2-oxoglutarate 3-dioxygenase (377 aa).

The region spanning 193-297 is the Fe2OG dioxygenase domain; sequence CVDMDQKVVV…RLSIATFQNP (105 aa). The Fe cation site is built by histidine 220, aspartate 222, and histidine 278. A 2-oxoglutarate-binding site is contributed by arginine 288.

Belongs to the iron/ascorbate-dependent oxidoreductase family. Requires Fe(2+) as cofactor. L-ascorbate is required as a cofactor.

It catalyses the reaction a (2S)-flavan-4-one + 2-oxoglutarate + O2 = a (2R,3R)-dihydroflavonol + succinate + CO2. It functions in the pathway secondary metabolite biosynthesis; flavonoid biosynthesis. In terms of biological role, catalyzes the 3-beta-hydroxylation of 2S-flavanones to 2R,3R-dihydroflavonols which are intermediates in the biosynthesis of flavonols, anthocyanidins, catechins and proanthocyanidins in plants. The sequence is that of Naringenin,2-oxoglutarate 3-dioxygenase from Hordeum vulgare (Barley).